An 86-amino-acid polypeptide reads, in one-letter code: Small ribosomal subunit protein bS16 (86 aa).

It belongs to the bacterial ribosomal protein bS16 family.

The chain is Small ribosomal subunit protein bS16 from Methylibium petroleiphilum (strain ATCC BAA-1232 / LMG 22953 / PM1).